Consider the following 170-residue polypeptide: Putative 3-methyladenine DNA glycosylase (170 aa).

Belongs to the DNA glycosylase MPG family.

This Sodalis glossinidius protein is Putative 3-methyladenine DNA glycosylase.